The sequence spans 149 residues: Arginine repressor (149 aa).

This sequence belongs to the ArgR family.

It is found in the cytoplasm. It functions in the pathway amino-acid biosynthesis; L-arginine biosynthesis [regulation]. In terms of biological role, regulates arginine biosynthesis genes. This chain is Arginine repressor, found in Bacillus mycoides (strain KBAB4) (Bacillus weihenstephanensis).